A 179-amino-acid chain; its full sequence is uncharacterized protein (179 aa).

A helical membrane pass occupies residues 5-25; that stretch reads MLAGIGIGVAAALGVAAVASL.

This sequence to Rickettsia 17 kDa surface antigen.

Its subcellular location is the membrane. This is an uncharacterized protein from Escherichia coli O6:H1 (strain CFT073 / ATCC 700928 / UPEC).